A 341-amino-acid chain; its full sequence is Transcription factor VIP1 (341 aa).

3 disordered regions span residues 1 to 33, 59 to 106, and 135 to 156; these read MEGGGRGPNQTILSEIEHMPEAPRQRISHHRRA, SLDF…PEAR, and SSGEKKKGNHHHSRSNSMDGEM. The segment at 1–162 is necessary and sufficient for transient T-DNA transformation end expression; the sequence is MEGGGRGPNQ…DGEMSSASFN (162 aa). The span at 15–24 shows a compositional bias: basic and acidic residues; that stretch reads EIEHMPEAPR. Low complexity predominate over residues 71-80; sequence QSQQQPQASP. A Phosphoserine modification is found at S79. Positions 163 to 341 are involved in homomultimerization and histone H2A binding; it reads IESILASVSG…PSYMDFTKRG (179 aa). A bZIP domain is found at 194–257; that stretch reads DPKRAKRILA…SELNTENKHL (64 aa). A basic motif region spans residues 196-217; the sequence is KRAKRILANRQSAARSKERKIR. The Nuclear localization signal signature appears at 198–205; it reads AKRILANR. Residues 222 to 257 are leucine-zipper; it reads LERKVQTLQNEATTLSAQVTMLQRGTSELNTENKHL. Residues 307 to 331 are compositionally biased toward polar residues; the sequence is SQQSAMNQFGNKTNQQMSTNGQPSL. A disordered region spans residues 307–341; it reads SQQSAMNQFGNKTNQQMSTNGQPSLPSYMDFTKRG.

It belongs to the bZIP family. Forms homomultimers. Interacts with Agrobacterium tumefaciens VirE2 and mediates its translocation to the host nucleus. Binds to VIP2. Forms a complex made of Agrobacterium VirE2, VIP1, VIP2 and single-stranded DNA (ssDNA). The interaction with KAP1 mediates its nuclear import. Binds to the H2A histone RAT5. Interacts with MPK3 and Agrobacterium virF. Forms a complex made of VIP1, VBF and Agrobacterium virE2. Interacts with SCF(VBF) E3 ubiquitin ligase complex. Binds directly to VBF. Forms heterodimers with BZIP34 and BZIP61. Phosphorylated by MPK3. This phosphorylation promotes nuclear localization. In terms of tissue distribution, mostly expressed in dividing cells, present in leaves, roots and seedlings.

The protein resides in the cytoplasm. Its subcellular location is the nucleus. Transcription activator that binds specifically to the VIP1 response elements (VREs) DNA sequence 5'-ACNGCT-3' found in some stress genes (e.g. TRX8 and MYB44), when phosphorylated/activated by MPK3. Required for Agrobacterium VirE2 nuclear import and tumorigenicity. Promotes transient expression of T-DNA in early stages by interacting with VirE2 in complex with the T-DNA and facilitating its translocation to the nucleus, and mediates stable genetic transformation by Agrobacterium by binding H2A histone. Prevents cell differentiation and shoot formation. Limits sulfate utilization efficiency (SUE) and sulfate uptake, especially in low-sulfur conditions. Plays a role in osmosensory response by binding to the 5'-AGCTGT/G-3' DNA sequence found in the promoters of the hypoosmolarity-responsive genes CYP707A1 and CYP707A3. Involved in the negative regulation of touch-induced root bending and salt-dependent root bending. The sequence is that of Transcription factor VIP1 from Arabidopsis thaliana (Mouse-ear cress).